We begin with the raw amino-acid sequence, 188 residues long: Phosphatidylinositol N-acetylglucosaminyltransferase subunit H (188 aa).

This sequence belongs to the PIGH family. Component of the glycosylphosphatidylinositol-N-acetylglucosaminyltransferase (GPI-GnT) complex composed at least by PIGA, PIGC, PIGH, PIGP, PIGQ, PIGY and DPM2. Interacts with PIGQ.

The protein localises to the cytoplasm. Its pathway is glycolipid biosynthesis; glycosylphosphatidylinositol-anchor biosynthesis. In terms of biological role, part of the glycosylphosphatidylinositol-N-acetylglucosaminyltransferase (GPI-GnT) complex that catalyzes the transfer of N-acetylglucosamine from UDP-N-acetylglucosamine to phosphatidylinositol and participates in the first step of GPI biosynthesis. The chain is Phosphatidylinositol N-acetylglucosaminyltransferase subunit H from Bos taurus (Bovine).